A 417-amino-acid chain; its full sequence is Tryptophan decarboxylase (417 aa).

Position 263 is an N6-(pyridoxal phosphate)lysine (lysine 263).

It belongs to the group II decarboxylase family. Pyridoxal 5'-phosphate serves as cofactor.

Its subcellular location is the cytoplasm. The enzyme catalyses L-tryptophan + H(+) = tryptamine + CO2. Its activity is regulated as follows. Inhibited by (S)-alpha-fluoromethyltryptophan. Catalyzes the decarboxylation of tryptophan to tryptamine. Tryptamine is a neurotransmitter that induces the release of serotonin, which is suggested to modulate gastrointestinal motility. Therefore, the tryptophan decarboxylase from the gut bacteria Clostridium sporogenes (strain ATCC 15579) may influence host brain and behavior. Has weak activity with tyrosine. Activity against phenylalanine is undetectable. This chain is Tryptophan decarboxylase, found in Clostridium sporogenes (strain ATCC 15579).